Consider the following 498-residue polypeptide: Aspartyl aminopeptidase (498 aa).

Residue His91 participates in Zn(2+) binding. His166 contacts substrate. Asp274 serves as a coordination point for Zn(2+). Glu311 contacts substrate. Residues Glu312 and Asp363 each contribute to the Zn(2+) site. Asp363, His366, Lys391, and Tyr398 together coordinate substrate. His463 serves as a coordination point for Zn(2+).

It belongs to the peptidase M18 family. As to quaternary structure, tetrahedron-shaped homododecamer built from six homodimers. The cofactor is Zn(2+). The N-terminus is blocked.

It carries out the reaction Release of an N-terminal aspartate or glutamate from a peptide, with a preference for aspartate.. With respect to regulation, inhibited by zinc. Stimulated by calcium and bacitracin. The protein is Aspartyl aminopeptidase (dapA) of Aspergillus oryzae (strain ATCC 42149 / RIB 40) (Yellow koji mold).